Reading from the N-terminus, the 340-residue chain is MLVLAIETSCDETAAALVRDGRSILSSVVSSQVKDHAVYGGVVPEIASRKHLETIPAVIGEALRLADVTLDHVEGVAVTQGPGLAGALLVGLSVAKSIAFARRLPLVGVNHIEAHLAAIFLEREVAYPYLALVVSGGHSHLYRVDGIGRCTTLGQTLDDAAGEAFDKVAKLLGLPYPGGIEIDRLASAGDPDAIAFPRPLLHDGSFNFSFSGLKTAVLSAVKKQGLPEGKSLADFCASFQKAVCHVLVEKTFRAAEAAGIDRVVVAGGVACNSALRREMAHAAAARGVELMIPSPSLCGDNAAMIAVPGDYYLRCGEQGGLALDARVNWPLDLLGSGREG.

Residues His111 and His115 each contribute to the Fe cation site. Substrate contacts are provided by residues 133–137 (VVSGG), Asp166, Gly179, Asp183, and Asn272. Position 300 (Asp300) interacts with Fe cation.

The protein belongs to the KAE1 / TsaD family. Fe(2+) serves as cofactor.

The protein localises to the cytoplasm. It carries out the reaction L-threonylcarbamoyladenylate + adenosine(37) in tRNA = N(6)-L-threonylcarbamoyladenosine(37) in tRNA + AMP + H(+). Required for the formation of a threonylcarbamoyl group on adenosine at position 37 (t(6)A37) in tRNAs that read codons beginning with adenine. Is involved in the transfer of the threonylcarbamoyl moiety of threonylcarbamoyl-AMP (TC-AMP) to the N6 group of A37, together with TsaE and TsaB. TsaD likely plays a direct catalytic role in this reaction. This chain is tRNA N6-adenosine threonylcarbamoyltransferase, found in Geobacter sulfurreducens (strain ATCC 51573 / DSM 12127 / PCA).